Here is a 449-residue protein sequence, read N- to C-terminus: Protein cortex (449 aa).

6 WD repeats span residues 108 to 148 (TYSY…ISQG), 149 to 188 (YAEY…KIDS), 198 to 237 (NRNC…ISWR), 283 to 327 (DSDW…VRDT), 345 to 382 (TGEL…DQWG), and 386 to 425 (SGLD…KKMK). The D-box signature appears at 386-397 (SGLDRVRTMVFS).

Belongs to the WD repeat CORT family.

The protein localises to the cytoplasm. Functionally, controls wing pigmentation patterning by regulating scale cell development, thereby playing a key role in mimicry and crypsis. Probably acts as an activator of the anaphase promoting complex/cyclosome (APC/C) that promotes the ubiquitin ligase activity and substrate specificity of the APC/C. This Heliconius erato (Crimson patched longwing butterfly) protein is Protein cortex.